Consider the following 636-residue polypeptide: Chaperone protein DnaK (636 aa).

The residue at position 198 (T198) is a Phosphothreonine; by autocatalysis. Residues 600–636 (IAQQQAQAQQGSAEAGAQSQEDDVVDAEFEEVKDDKK) form a disordered region. Positions 601 to 618 (AQQQAQAQQGSAEAGAQS) are enriched in low complexity. Over residues 619–636 (QEDDVVDAEFEEVKDDKK) the composition is skewed to acidic residues.

The protein belongs to the heat shock protein 70 family.

Functionally, acts as a chaperone. The sequence is that of Chaperone protein DnaK from Vibrio vulnificus (strain CMCP6).